The following is a 545-amino-acid chain: E3 ubiquitin-protein ligase ipaH9.8 (545 aa).

An interaction with target proteins region spans residues 1–242 (MLPINNNFSL…YHGPRIYFSM (242 aa)). 8 LRR repeats span residues 57 to 77 (NSDE…NLPA), 78 to 99 (QITL…PVTL), 100 to 117 (KKLY…VLPP), 118 to 139 (ALES…PDSL), 140 to 157 (LTMN…SLPQ), 158 to 179 (ALKN…SEGN), 182 to 203 (VVRE…ILNL), and 205 to 228 (NECS…QRLT). The linker stretch occupies residues 243–250 (SDGQQNTL). The segment at 251–545 (HRPLADAVTA…SENGSQLHHS (295 aa)) is E3 ubiquitin-protein ligase catalytic domain. The region spanning 253 to 545 (PLADAVTAWF…SENGSQLHHS (293 aa)) is the NEL domain. The active-site Glycyl thioester intermediate is the Cys337.

The protein belongs to the LRR-containing bacterial E3 ligase family. As to quaternary structure, also interacts with human and mouse U2AF1 (U2AF35). Ubiquitinated in the presence of host E1 ubiquitin-activating enzyme, E2 ubiquitin-conjugating enzyme and ubiquitin.

The protein localises to the secreted. Its subcellular location is the host cytoplasm. The protein resides in the host nucleus. It carries out the reaction S-ubiquitinyl-[E2 ubiquitin-conjugating enzyme]-L-cysteine + [acceptor protein]-L-lysine = [E2 ubiquitin-conjugating enzyme]-L-cysteine + N(6)-ubiquitinyl-[acceptor protein]-L-lysine.. Its activity is regulated as follows. Exists in an autoinhibited state in the absence of substrate protein, due to interactions of the leucine-rich repeats with NEL domain. Is activated upon binding to a substrate protein. In terms of biological role, effector E3 ubiquitin ligase that interferes with host's ubiquitination pathway and modulates the acute inflammatory responses, thus facilitating bacterial colonization within the host cell. Interacts with IKBKG (NEMO) and TNIP1 (ABIN-1), a ubiquitin-binding adapter protein, which results in TNIP1-dependent 'Lys-27'-linked polyubiquitination of IKBKG. Consequently, polyubiquitinated IKBKG undergoes proteasome-dependent degradation, which perturbs NF-kappa-B activation during bacterial infection. Mediates polyubiquitination of host U2AF1, leading to its proteasomal degradation. Catalyzes 'Lys-48'-linked polyubiquitination and subsequent degradation of a subset of host guanylate-binding proteins (GBP1, GBP2, GBP4 and GBP6), thereby suppressing host cell defense. In contrast, host GBP3 and GBP7 are not ubiquitinated by IpaH9.8. Uses UBE2D2 (UBCH5B) as an E2 ubiquitin-conjugating enzyme. The polypeptide is E3 ubiquitin-protein ligase ipaH9.8 (ipaH9.8) (Shigella dysenteriae serotype 1 (strain Sd197)).